Here is a 320-residue protein sequence, read N- to C-terminus: Tetraacyldisaccharide 4'-kinase (320 aa).

53–60 (SVGGNGKT) contacts ATP.

The protein belongs to the LpxK family.

It catalyses the reaction a lipid A disaccharide + ATP = a lipid IVA + ADP + H(+). Its pathway is glycolipid biosynthesis; lipid IV(A) biosynthesis; lipid IV(A) from (3R)-3-hydroxytetradecanoyl-[acyl-carrier-protein] and UDP-N-acetyl-alpha-D-glucosamine: step 6/6. Its function is as follows. Transfers the gamma-phosphate of ATP to the 4'-position of a tetraacyldisaccharide 1-phosphate intermediate (termed DS-1-P) to form tetraacyldisaccharide 1,4'-bis-phosphate (lipid IVA). The protein is Tetraacyldisaccharide 4'-kinase of Psychromonas ingrahamii (strain DSM 17664 / CCUG 51855 / 37).